Consider the following 721-residue polypeptide: Phosphoribosylformylglycinamidine synthase subunit PurL (721 aa).

Histidine 47 is an active-site residue. Residues tyrosine 50 and lysine 89 each coordinate ATP. Glutamate 91 provides a ligand contact to Mg(2+). Residues 92 to 95 (SHNH) and arginine 114 each bind substrate. Histidine 93 acts as the Proton acceptor in catalysis. Mg(2+) is bound at residue aspartate 115. Glutamine 238 is a binding site for substrate. Aspartate 266 is a Mg(2+) binding site. 310–312 (ESQ) lines the substrate pocket. Positions 490 and 527 each coordinate ATP. Asparagine 528 contacts Mg(2+). Position 530 (serine 530) interacts with substrate.

The protein belongs to the FGAMS family. As to quaternary structure, monomer. Part of the FGAM synthase complex composed of 1 PurL, 1 PurQ and 2 PurS subunits.

Its subcellular location is the cytoplasm. It carries out the reaction N(2)-formyl-N(1)-(5-phospho-beta-D-ribosyl)glycinamide + L-glutamine + ATP + H2O = 2-formamido-N(1)-(5-O-phospho-beta-D-ribosyl)acetamidine + L-glutamate + ADP + phosphate + H(+). The protein operates within purine metabolism; IMP biosynthesis via de novo pathway; 5-amino-1-(5-phospho-D-ribosyl)imidazole from N(2)-formyl-N(1)-(5-phospho-D-ribosyl)glycinamide: step 1/2. Part of the phosphoribosylformylglycinamidine synthase complex involved in the purines biosynthetic pathway. Catalyzes the ATP-dependent conversion of formylglycinamide ribonucleotide (FGAR) and glutamine to yield formylglycinamidine ribonucleotide (FGAM) and glutamate. The FGAM synthase complex is composed of three subunits. PurQ produces an ammonia molecule by converting glutamine to glutamate. PurL transfers the ammonia molecule to FGAR to form FGAM in an ATP-dependent manner. PurS interacts with PurQ and PurL and is thought to assist in the transfer of the ammonia molecule from PurQ to PurL. The sequence is that of Phosphoribosylformylglycinamidine synthase subunit PurL from Ruegeria sp. (strain TM1040) (Silicibacter sp.).